The chain runs to 905 residues: Cation-transporting ATPase pma1 (905 aa).

4 helical membrane passes run 60-80 (FLLQ…TVKA), 81-101 (FLGS…NAII), 248-268 (FSHT…AVGW), and 283-303 (ALAV…TLAI). Asp-333 serves as the catalytic 4-aspartylphosphate intermediate. 5 helical membrane-spanning segments follow: residues 716–736 (ILIS…VLWL), 774–794 (LLHR…GMFE), 809–829 (MAIQ…SQLG), 848–868 (ILLL…QLPF), and 880–900 (WQQW…AILA).

Belongs to the cation transport ATPase (P-type) (TC 3.A.3) family. Type IIA subfamily.

It is found in the cell membrane. It carries out the reaction ATP + H2O = ADP + phosphate + H(+). Functionally, could mediate calcium influx. This is Cation-transporting ATPase pma1 (pma1) from Synechocystis sp. (strain ATCC 27184 / PCC 6803 / Kazusa).